A 196-amino-acid chain; its full sequence is Pro-FMRFamide-related neuropeptide VF (196 aa).

Residues M1 to C26 form the signal peptide. Positions A27–R55 are excised as a propeptide. At F92 the chain carries Phenylalanine amide. Propeptides lie at residues N95–E99 and N115–V121. F131 is subject to Phenylalanine amide. Residues T134–K196 constitute a propeptide that is removed on maturation.

This sequence belongs to the FARP (FMRFamide related peptide) family. Specifically expressed in the retina. As to expression, detected in the hypothalamus.

Its subcellular location is the secreted. Its function is as follows. Efficiently inhibits forskolin-induced production of cAMP. Acts as a potent negative regulator of gonadotropin synthesis and secretion. Induces secretion of prolactin. Efficiently inhibits forskolin-induced production of cAMP. Blocks morphine-induced analgesia. Functionally, shows no inhibitory activity of forskolin-induced production of cAMP. This Homo sapiens (Human) protein is Pro-FMRFamide-related neuropeptide VF.